We begin with the raw amino-acid sequence, 83 residues long: Small ribosomal subunit protein bS18 (83 aa).

The protein belongs to the bacterial ribosomal protein bS18 family. Part of the 30S ribosomal subunit. Forms a tight heterodimer with protein bS6.

Its function is as follows. Binds as a heterodimer with protein bS6 to the central domain of the 16S rRNA, where it helps stabilize the platform of the 30S subunit. The sequence is that of Small ribosomal subunit protein bS18 from Methylobacterium sp. (strain 4-46).